The sequence spans 33 residues: Cytochrome b6-f complex subunit 7 (33 aa).

Residues 9–29 (AVICFTLTLIGLSLGFVLLKI) form a helical membrane-spanning segment.

This sequence belongs to the PetM family. As to quaternary structure, the 4 large subunits of the cytochrome b6-f complex are cytochrome b6, subunit IV (17 kDa polypeptide, PetD), cytochrome f and the Rieske protein, while the 4 small subunits are PetG, PetL, PetM and PetN. The complex functions as a dimer.

It is found in the plastid. It localises to the cyanelle thylakoid membrane. Its function is as follows. Component of the cytochrome b6-f complex, which mediates electron transfer between photosystem II (PSII) and photosystem I (PSI), cyclic electron flow around PSI, and state transitions. This Cyanophora paradoxa protein is Cytochrome b6-f complex subunit 7.